The sequence spans 229 residues: Endo-1,4-beta-xylanase 1 (229 aa).

Residues 1-19 (MVAFSSLICALTSIASTLA) form the signal peptide. The propeptide occupies 20–51 (MPTGLEPESSVNVTERGMYDFVLGAHNDHRRR). N-linked (GlcNAc...) asparagine glycosylation occurs at N31. In terms of domain architecture, GH11 spans 42 to 228 (LGAHNDHRRR…GSGSASQSVS (187 aa)). Residue Y117 participates in substrate binding. E126 functions as the Nucleophile in the catalytic mechanism. The substrate site is built by Y128, R160, P164, Q174, and Y209. E215 functions as the Proton donor in the catalytic mechanism.

Belongs to the glycosyl hydrolase 11 (cellulase G) family.

Its subcellular location is the secreted. The catalysed reaction is Endohydrolysis of (1-&gt;4)-beta-D-xylosidic linkages in xylans.. Its pathway is glycan degradation; xylan degradation. Functionally, glycoside hydrolase involved in the hydrolysis of xylan, a major plant cell wall hemicellulose made up of 1,4-beta-linked D-xylopyranose residues. Catalyzes the endohydrolysis of the main-chain 1,4-beta-glycosidic bonds connecting the xylose subunits yielding various xylooligosaccharides and xylose. This chain is Endo-1,4-beta-xylanase 1, found in Hypocrea jecorina (strain QM6a) (Trichoderma reesei).